Here is a 525-residue protein sequence, read N- to C-terminus: Arabinose import ATP-binding protein AraG 2 (525 aa).

Residues 1 to 25 form a disordered region; the sequence is MTDTTIRARGAQAAGSPAGAGPLDA. Residues 7–25 show a composition bias toward low complexity; it reads RARGAQAAGSPAGAGPLDA. ABC transporter domains follow at residues 35–270 and 281–524; these read LELD…MVGR and REPG…LALP. 67–74 serves as a coordination point for ATP; it reads GENGAGKS.

Belongs to the ABC transporter superfamily. Arabinose importer (TC 3.A.1.2.2) family. As to quaternary structure, the complex is composed of two ATP-binding proteins (AraG), two transmembrane proteins (AraH) and a solute-binding protein (AraF).

It localises to the cell inner membrane. It carries out the reaction L-arabinose(out) + ATP + H2O = L-arabinose(in) + ADP + phosphate + H(+). Its function is as follows. Part of the ABC transporter complex AraFGH involved in arabinose import. Responsible for energy coupling to the transport system. In Burkholderia thailandensis (strain ATCC 700388 / DSM 13276 / CCUG 48851 / CIP 106301 / E264), this protein is Arabinose import ATP-binding protein AraG 2.